We begin with the raw amino-acid sequence, 320 residues long: Acetyl-coenzyme A carboxylase carboxyl transferase subunit alpha (320 aa).

The 255-residue stretch at 41-295 (KIEEKAQQAL…GDAIAAAFAE (255 aa)) folds into the CoA carboxyltransferase C-terminal domain.

It belongs to the AccA family. Acetyl-CoA carboxylase is a heterohexamer composed of biotin carboxyl carrier protein (AccB), biotin carboxylase (AccC) and two subunits each of ACCase subunit alpha (AccA) and ACCase subunit beta (AccD).

The protein resides in the cytoplasm. It carries out the reaction N(6)-carboxybiotinyl-L-lysyl-[protein] + acetyl-CoA = N(6)-biotinyl-L-lysyl-[protein] + malonyl-CoA. It participates in lipid metabolism; malonyl-CoA biosynthesis; malonyl-CoA from acetyl-CoA: step 1/1. Its function is as follows. Component of the acetyl coenzyme A carboxylase (ACC) complex. First, biotin carboxylase catalyzes the carboxylation of biotin on its carrier protein (BCCP) and then the CO(2) group is transferred by the carboxyltransferase to acetyl-CoA to form malonyl-CoA. The chain is Acetyl-coenzyme A carboxylase carboxyl transferase subunit alpha from Rhodopseudomonas palustris (strain ATCC BAA-98 / CGA009).